A 628-amino-acid polypeptide reads, in one-letter code: Translation factor GUF1, mitochondrial (628 aa).

The tr-type G domain occupies 27 to 209 (LPSRNFSIIA…AIISRIPPPS (183 aa)). Residues 36-43 (AHIDHGKS), 102-106 (DTPGH), and 156-159 (NKID) each bind GTP.

It belongs to the TRAFAC class translation factor GTPase superfamily. Classic translation factor GTPase family. LepA subfamily.

It localises to the mitochondrion inner membrane. The enzyme catalyses GTP + H2O = GDP + phosphate + H(+). In terms of biological role, promotes mitochondrial protein synthesis. May act as a fidelity factor of the translation reaction, by catalyzing a one-codon backward translocation of tRNAs on improperly translocated ribosomes. Binds to mitochondrial ribosomes in a GTP-dependent manner. This is Translation factor GUF1, mitochondrial from Laccaria bicolor (strain S238N-H82 / ATCC MYA-4686) (Bicoloured deceiver).